Consider the following 221-residue polypeptide: 3-phospho-D-glycerate guanylyltransferase (221 aa).

Belongs to the CofC family.

It carries out the reaction (2R)-3-phosphoglycerate + GTP + H(+) = 3-[(R)-glyceryl]-diphospho-5'-guanosine + diphosphate. The catalysed reaction is (2S)-2-phospholactate + GTP + H(+) = (2S)-lactyl-2-diphospho-5'-guanosine + diphosphate. It functions in the pathway cofactor biosynthesis; coenzyme F420 biosynthesis. In terms of biological role, guanylyltransferase that catalyzes the activation of (2R)-3-phosphoglycerate (3PG) as 3-[(R)-glyceryl]-diphospho-5'-guanosine, via the condensation of 3PG with GTP. It is involved in the biosynthesis of a derivative of the hydride carrier cofactor coenzyme F420, 3PG-F420. Can also use (2S)-2-phospholactate (2-PL), with lower turnover, and has weak activity with phosphoenolpyruvate (PEP). The polypeptide is 3-phospho-D-glycerate guanylyltransferase (Mycetohabitans rhizoxinica (strain DSM 19002 / CIP 109453 / HKI 454) (Paraburkholderia rhizoxinica)).